The sequence spans 518 residues: Bifunctional purine biosynthesis protein PurH (518 aa).

Residues 1-146 enclose the MGS-like domain; the sequence is MARIALISVS…KNHESVSILT (146 aa).

Belongs to the PurH family.

It catalyses the reaction (6R)-10-formyltetrahydrofolate + 5-amino-1-(5-phospho-beta-D-ribosyl)imidazole-4-carboxamide = 5-formamido-1-(5-phospho-D-ribosyl)imidazole-4-carboxamide + (6S)-5,6,7,8-tetrahydrofolate. The catalysed reaction is IMP + H2O = 5-formamido-1-(5-phospho-D-ribosyl)imidazole-4-carboxamide. Its pathway is purine metabolism; IMP biosynthesis via de novo pathway; 5-formamido-1-(5-phospho-D-ribosyl)imidazole-4-carboxamide from 5-amino-1-(5-phospho-D-ribosyl)imidazole-4-carboxamide (10-formyl THF route): step 1/1. The protein operates within purine metabolism; IMP biosynthesis via de novo pathway; IMP from 5-formamido-1-(5-phospho-D-ribosyl)imidazole-4-carboxamide: step 1/1. This is Bifunctional purine biosynthesis protein PurH from Prochlorococcus marinus (strain MIT 9211).